A 131-amino-acid chain; its full sequence is ER membrane protein complex subunit 5 (131 aa).

Over 1–3 (MAP) the chain is Cytoplasmic. Residues 4 to 22 (SLWKGLVGVGLFALAHAAF) form a helical membrane-spanning segment. The Lumenal segment spans residues 23 to 43 (SAAQHRSYMRLTEKEDESLPI). A helical transmembrane segment spans residues 44-63 (DIVLQTLLAFAVTCYGIVHI). Residues 64–131 (AGEFKDMDAT…KLRKFDSLRR (68 aa)) are Cytoplasmic-facing. Phosphoserine is present on Ser120.

Belongs to the membrane magnesium transporter (TC 1.A.67) family. As to quaternary structure, component of the ER membrane protein complex (EMC). In terms of tissue distribution, abundant in heart muscle and kidney with lower levels in liver and brain and very little expression in intestine or colon. In kidney, highest levels in distal convoluted tubule.

It localises to the endoplasmic reticulum membrane. Its subcellular location is the golgi apparatus membrane. The protein resides in the early endosome membrane. Part of the endoplasmic reticulum membrane protein complex (EMC) that enables the energy-independent insertion into endoplasmic reticulum membranes of newly synthesized membrane proteins. Preferentially accommodates proteins with transmembrane domains that are weakly hydrophobic or contain destabilizing features such as charged and aromatic residues. Involved in the cotranslational insertion of multi-pass membrane proteins in which stop-transfer membrane-anchor sequences become ER membrane spanning helices. It is also required for the post-translational insertion of tail-anchored/TA proteins in endoplasmic reticulum membranes. By mediating the proper cotranslational insertion of N-terminal transmembrane domains in an N-exo topology, with translocated N-terminus in the lumen of the ER, controls the topology of multi-pass membrane proteins like the G protein-coupled receptors. By regulating the insertion of various proteins in membranes, it is indirectly involved in many cellular processes. May be involved Mg(2+) transport. The protein is ER membrane protein complex subunit 5 of Mus musculus (Mouse).